Reading from the N-terminus, the 419-residue chain is MAQEVIKIRGGRTLNGEVNISGAKNSAVAIIPATLLAQGHVKLEGLPQISDVKTLVSLLEDLNIKASLNGTELEVDTTEIQNAALPNNKVESLRASYYMMGAMLGRFKKCVIGLPGGCPLGPRPIDQHIKGFKALGAEIDESSTTSMKIEAKELKGAHIFLDMVSVGATINIMLAAVYATGQTVIENAAKEPEVVDVANFLTSMGANIKGAGTSTIKINGVKELHGSEYQVIPDRIEAGTYMCIAAACGENVILNNIVPKHVETLTAKFSELGVNVDVRDERIRINNNAPYRFVDIKTLVYPGFATDLQQPITPLLFMANGPSFVTDTIYPERFKHVEELKRMGANIEVDEGTATIKPSTLHGAEVYASDLRAGACLIIAGLIAEGVTTIYNVKHIYRGYTDIVEHLKALGADIWTETV.

Residue 24-25 (KN) participates in phosphoenolpyruvate binding. Residue Arg-94 participates in UDP-N-acetyl-alpha-D-glucosamine binding. Residue Cys-118 is the Proton donor of the active site. Position 118 is a 2-(S-cysteinyl)pyruvic acid O-phosphothioketal (Cys-118). Residues 123-127 (RPIDQ), Asp-307, and Ile-329 each bind UDP-N-acetyl-alpha-D-glucosamine.

This sequence belongs to the EPSP synthase family. MurA subfamily.

The protein resides in the cytoplasm. It carries out the reaction phosphoenolpyruvate + UDP-N-acetyl-alpha-D-glucosamine = UDP-N-acetyl-3-O-(1-carboxyvinyl)-alpha-D-glucosamine + phosphate. The protein operates within cell wall biogenesis; peptidoglycan biosynthesis. Functionally, cell wall formation. Adds enolpyruvyl to UDP-N-acetylglucosamine. The chain is UDP-N-acetylglucosamine 1-carboxyvinyltransferase 2 from Staphylococcus aureus (strain MRSA252).